Consider the following 761-residue polypeptide: Probable ubiquitin carboxyl-terminal hydrolase creB (761 aa).

The interval 1-45 (MGSFLRSFRHNGGSTAPSVGAVPAKKEPQPPPMTPLEKRLLDMGP) is disordered. A compositionally biased stretch (basic and acidic residues) spans 36 to 45 (LEKRLLDMGP). One can recognise a USP domain in the interval 55–468 (YGMENYGNTC…CAYVLFYQET (414 aa)). The active-site Nucleophile is Cys64. 2 disordered regions span residues 113–146 (EAEA…DSPE) and 242–269 (PLME…KTPN). A compositionally biased stretch (polar residues) spans 256-269 (SVDQSSSTGSKTPN). Residue His419 is the Proton acceptor of the active site. Residues 496–761 (LKQNGFPQSP…LRKKSFSILS (266 aa)) are disordered. A compositionally biased stretch (pro residues) spans 555-566 (PLSPVPPVPPIP). Residues 577 to 640 (KNDALAKREE…ASKAEEDRRL (64 aa)) are a coiled coil. The segment covering 580 to 649 (ALAKREEKER…LSTENGKEKQ (70 aa)) has biased composition (basic and acidic residues). Residues 655–666 (RLKRGSKSLSHR) are compositionally biased toward basic residues. Residues 692–710 (SQSGPTSEQQQQQRQQSPP) are compositionally biased toward low complexity. A compositionally biased stretch (pro residues) spans 712–722 (HDQPPNSPQPG). Residues 725-743 (TIREDEQVNHKDSKHERTG) show a composition bias toward basic and acidic residues. Basic residues predominate over residues 744 to 761 (HGKWRSFSLRKKSFSILS).

Belongs to the peptidase C19 family. Interacts with creA, creC and qutD.

It carries out the reaction Thiol-dependent hydrolysis of ester, thioester, amide, peptide and isopeptide bonds formed by the C-terminal Gly of ubiquitin (a 76-residue protein attached to proteins as an intracellular targeting signal).. In terms of biological role, ubiquitin thioesterase component of the regulatory network controlling carbon source utilization through ubiquitination and deubiquitination involving creA, creB, creC, creD and acrB. Deubiquitinates the creA catabolic repressor and the quinate permease qutD. Also plays a role in response to carbon starvation and the control of extracellular proteases activity. The chain is Probable ubiquitin carboxyl-terminal hydrolase creB (creB) from Neosartorya fischeri (strain ATCC 1020 / DSM 3700 / CBS 544.65 / FGSC A1164 / JCM 1740 / NRRL 181 / WB 181) (Aspergillus fischerianus).